The following is a 290-amino-acid chain: PIH1 domain-containing protein 1 (290 aa).

Positions 34–50 are enriched in polar residues; it reads ELQQAQTSRPESTQIQP. The tract at residues 34–53 is disordered; the sequence is ELQQAQTSRPESTQIQPQPG. Position 173 is a phosphoserine (Ser173).

It belongs to the PIH1 family. In terms of assembly, component of the R2TP complex composed at least of RUVBL1, RUVBL2, RPAP3 and PIHD1. Component of the PAQosome complex which is responsible for the biogenesis of several protein complexes and which consists of R2TP complex members RUVBL1, RUVBL2, RPAP3 and PIH1D1, URI complex members PFDN2, PFDN6, PDRG1, UXT and URI1 as well as ASDURF, POLR2E and DNAAF10/WDR92. Interacts with phosphorylated TELO2 and mediates interaction of TELO2 with the R2TP complex. Interacts with phosphorylated ECD, EFTUD2/SNRP116, RPB1 and UBR5 and with RPB1 in a phosphorylation-independent manner. Interacts with the core C/D box snoRNP particle components NOP58 and FBL and with RUVBL1/TIP49. Interacts with RPAP3 and DNAAF10. Interacts with histone H4 and with SWI/SNF complex member SMARCB1/SNF5. Interacts with the mTORC1 complex member RPTOR. Interacts with MSL1.

Its subcellular location is the nucleus. Functionally, involved in the assembly of C/D box small nucleolar ribonucleoprotein (snoRNP) particles. Recruits the SWI/SNF complex to the core promoter of rRNA genes and enhances pre-rRNA transcription. Mediates interaction of TELO2 with the R2TP complex which is necessary for the stability of MTOR and SMG1. Positively regulates the assembly and activity of the mTORC1 complex. This Bos taurus (Bovine) protein is PIH1 domain-containing protein 1 (PIH1D1).